The primary structure comprises 154 residues: MEYKQSPLPANKAIALVAHDNKKQDLLAWCRKHLDALRHHQLMATGTTGALIERETGLAIHKLISGPLGGDQQVGALITEGKVDMLVFFWDPFEPMPHDPDVKALLRIAAVWNIPVACNQVSADFMVASPCFSTPVERLIPDYAAYMARRAQGN.

The MGS-like domain occupies 6 to 154 (SPLPANKAIA…AYMARRAQGN (149 aa)). Residues H19, K23, 45–48 (TGTT), and 65–66 (SG) contribute to the substrate site. D71 functions as the Proton donor/acceptor in the catalytic mechanism. Position 98 (H98) interacts with substrate.

The protein belongs to the methylglyoxal synthase family.

The catalysed reaction is dihydroxyacetone phosphate = methylglyoxal + phosphate. In terms of biological role, catalyzes the formation of methylglyoxal from dihydroxyacetone phosphate. The polypeptide is Methylglyoxal synthase (Cellvibrio japonicus (strain Ueda107) (Pseudomonas fluorescens subsp. cellulosa)).